The sequence spans 138 residues: UPF0201 protein PYRAB09730 (138 aa).

It belongs to the UPF0201 family.

In Pyrococcus abyssi (strain GE5 / Orsay), this protein is UPF0201 protein PYRAB09730.